Here is a 162-residue protein sequence, read N- to C-terminus: Peptide deformylase (162 aa).

C86 and H128 together coordinate Fe cation. E129 is an active-site residue. Residue H132 coordinates Fe cation.

This sequence belongs to the polypeptide deformylase family. Requires Fe(2+) as cofactor.

The enzyme catalyses N-terminal N-formyl-L-methionyl-[peptide] + H2O = N-terminal L-methionyl-[peptide] + formate. Removes the formyl group from the N-terminal Met of newly synthesized proteins. Requires at least a dipeptide for an efficient rate of reaction. N-terminal L-methionine is a prerequisite for activity but the enzyme has broad specificity at other positions. The sequence is that of Peptide deformylase from Treponema pallidum (strain Nichols).